The sequence spans 152 residues: Catabolic 3-dehydroquinase (152 aa).

Tyr-24 acts as the Proton acceptor in catalysis. Positions 75, 81, and 88 each coordinate substrate. Catalysis depends on His-101, which acts as the Proton donor. Substrate is bound by residues 102 to 103 (IS) and Arg-112.

The protein belongs to the type-II 3-dehydroquinase family. Homododecamer. Adopts a ring-like structure, composed of an arrangement of two hexameric rings stacked on top of one another.

It catalyses the reaction 3-dehydroquinate = 3-dehydroshikimate + H2O. Its pathway is aromatic compound metabolism; 3,4-dihydroxybenzoate biosynthesis; 3,4-dihydroxybenzoate from 3-dehydroquinate: step 1/2. Its function is as follows. Is involved in the catabolism of quinate. Allows the utilization of quinate as carbon source via the beta-ketoadipate pathway. This chain is Catabolic 3-dehydroquinase, found in Phaeosphaeria nodorum (strain SN15 / ATCC MYA-4574 / FGSC 10173) (Glume blotch fungus).